We begin with the raw amino-acid sequence, 209 residues long: Outer-membrane lipoprotein carrier protein (209 aa).

Residues 1–24 (MTRYVISRLSAIALLALAPALALA) form the signal peptide.

It belongs to the LolA family. As to quaternary structure, monomer.

The protein localises to the periplasm. Its function is as follows. Participates in the translocation of lipoproteins from the inner membrane to the outer membrane. Only forms a complex with a lipoprotein if the residue after the N-terminal Cys is not an aspartate (The Asp acts as a targeting signal to indicate that the lipoprotein should stay in the inner membrane). The protein is Outer-membrane lipoprotein carrier protein of Bordetella avium (strain 197N).